Reading from the N-terminus, the 445-residue chain is DNA repair protein RadA (445 aa).

Residues 10 to 27 (CSNCANISNKWSGQCFDC) form a C4-type zinc finger. 90 to 97 (GEPGIGKS) contributes to the ATP binding site. Residues 249 to 253 (KNRFG) carry the RadA KNRFG motif motif. Residues 348–445 (EIYLSIAGGL…HLQELKEIIK (98 aa)) form a lon-protease-like region.

The protein belongs to the RecA family. RadA subfamily.

DNA-dependent ATPase involved in processing of recombination intermediates, plays a role in repairing DNA breaks. Stimulates the branch migration of RecA-mediated strand transfer reactions, allowing the 3' invading strand to extend heteroduplex DNA faster. Binds ssDNA in the presence of ADP but not other nucleotides, has ATPase activity that is stimulated by ssDNA and various branched DNA structures, but inhibited by SSB. Does not have RecA's homology-searching function. This chain is DNA repair protein RadA, found in Rickettsia prowazekii (strain Madrid E).